The chain runs to 1012 residues: AP-2 complex subunit alpha-1 (1012 aa).

HEAT repeat units follow at residues 254–289, 354–391, 393–430, and 525–565; these read AMRA…VVKN, DIIK…VSNA, DIVE…DLSW, and PTIP…CIDV. A disordered region spans residues 652 to 678; the sequence is STDPESVARSLSHPNGTLSNIDPQTPS. Polar residues predominate over residues 663 to 675; sequence SHPNGTLSNIDPQ. The GAE domain occupies 742–841; it reads ALCLKDSGVL…LDFSYKFGAN (100 aa).

Belongs to the adaptor complexes large subunit family. Adaptor protein complex 2 (AP-2) is a heterotetramer composed of two large adaptins (alpha-type and beta-type subunits), a medium adaptin (mu-type subunit) and a small adaptin (sigma-type subunit). Binds to EPSIN2.

Its subcellular location is the membrane. The protein resides in the coated pit. Its function is as follows. Subunit of the adaptor protein complex 2 (AP-2). Adaptor protein complexes function in protein transport via transport vesicles in different membrane traffic pathways. Adaptor protein complexes are vesicle coat components and appear to be involved in cargo selection and vesicle formation. AP-2 is involved in clathrin-dependent endocytosis in which cargo proteins are incorporated into vesicles surrounded by clathrin (clathrin-coated vesicles, CCVs) which are destined for fusion with the early endosome. The complex binds polyphosphoinositides. The polypeptide is AP-2 complex subunit alpha-1 (ALPHA-ADR) (Arabidopsis thaliana (Mouse-ear cress)).